The primary structure comprises 199 residues: Tumor protein p53-inducible nuclear protein 2 (199 aa).

Residues 26 to 41 (VSEEDEVDGWLIIDLQ) carry the LIR motif. 3 disordered regions span residues 41–69 (QDSY…LMDE), 117–153 (LESG…LHHA), and 173–199 (LQRA…ARES). Residues 47–64 (PPDPRASPAPAGRPPPAP) are compositionally biased toward pro residues. Ser136 bears the Phosphoserine mark.

As to quaternary structure, interacts with VMP1, GABARAP, GABARAPL1, GABARAPL2, MAP1LC3A, MAP1LC3B, MAP1LC3C and THRA. In terms of tissue distribution, abundantly expressed in skeletal muscle and heart and expression is highly repressed in muscle from obese diabetic rats.

The protein resides in the cytoplasm. The protein localises to the cytosol. It is found in the nucleus. It localises to the PML body. Its subcellular location is the cytoplasmic vesicle. The protein resides in the autophagosome. Dual regulator of transcription and autophagy. Positively regulates autophagy and is required for autophagosome formation and processing. May act as a scaffold protein that recruits MAP1LC3A, GABARAP and GABARAPL2 and brings them to the autophagosome membrane by interacting with VMP1 where, in cooperation with the BECN1-PI3-kinase class III complex, they trigger autophagosome development. Acts as a transcriptional activator of THRA. The protein is Tumor protein p53-inducible nuclear protein 2 (Tp53inp2) of Rattus norvegicus (Rat).